Consider the following 140-residue polypeptide: ATP synthase epsilon chain (140 aa).

The protein belongs to the ATPase epsilon chain family. F-type ATPases have 2 components, CF(1) - the catalytic core - and CF(0) - the membrane proton channel. CF(1) has five subunits: alpha(3), beta(3), gamma(1), delta(1), epsilon(1). CF(0) has three main subunits: a, b and c.

The protein localises to the cell inner membrane. Produces ATP from ADP in the presence of a proton gradient across the membrane. In Colwellia psychrerythraea (strain 34H / ATCC BAA-681) (Vibrio psychroerythus), this protein is ATP synthase epsilon chain.